Consider the following 746-residue polypeptide: MSKILFCKSKVFLHPTSDARDNIAGFLLLTLEANKLSHQAILQYIPESGLSTLEISKLLKHEAKVGTCPTSTPFVIENSINFSNLVNTSLGQAFEISLSQIYCIQFRPPSPNGWYVGSLVIYPLTEQFTGFQPPVLFFHDQLCPSTTDKLKRLRKSMNPFDDSDELYWGGVDLRNKINELMELKKSNLEPEFWLVNPSLNDLRNFVSKDLLESYNNSKKDTTELATAGVKLNEKFQEWKWNVMSKIADVTTKSTNFIDSWLTNNSPIQKSQIDNEYLQKLLNNEKVKQIEQDYDSARVYLANWSLGVKQEAERYQKQNKLFDSYRNNIFNDLNLTDELSDTEINNALQRQFPLTEAKWNSLWDENDGRLRVTVNEVKDFIFHGGLENDSLRGKVWGFLLEIYPWDSSQDERVQIDQTLAAEYDQLKLTWSKDFLQFDDEDEEEYWNDQLFRISKDVRRCDRNLEIFQYNTIDGLPPPPQQLPANENNSTSPESANDESDDADDGVRNPHLIHLQNILITYNVYNTNLGYVQGMTDLLSPIYVIMKEEWKTFWCFTHFMDIMERNFLRDQSGIHEQMLTLVELVQLMLPELSEHLNKCDSGNLFFCFRMLLVWFKREFEMEDIMHIWENFWTFYYSSQFQLFFMLAILQKNSQAILQHLNQFDQILKFFNELNGKLDWNDLMVRAELLFKKFEKMMHVMERDLQNVSSSSSSSSTGVLPCQSERLTLLLSKKPIIRHEGQRSKNSVK.

2 positions are modified to phosphoserine: Ser-265 and Ser-339. In terms of domain architecture, Rab-GAP TBC spans 385–633 (LENDSLRGKV…HIWENFWTFY (249 aa)). Residues 470 to 505 (TIDGLPPPPQQLPANENNSTSPESANDESDDADDGV) are disordered. The segment covering 481 to 491 (LPANENNSTSP) has biased composition (polar residues).

Its subcellular location is the cytoplasm. Its function is as follows. GTPase-activating protein (GAP) that most effectively accelerates the intrinsic GTPase activity of Ypt/Rab-type GTPase YPT7 involved in vacuole docking and fusion. It is also active, but to a lesser extent, on YPT31, YPT32, YPT1, YPT6 and SEC4. Provides a catalytic arginine (arginine finger) in trans to accelerate the GTP hydrolysis rate of the substrate GTPase. This is GTPase-activating protein GYP7 (GYP7) from Saccharomyces cerevisiae (strain ATCC 204508 / S288c) (Baker's yeast).